A 375-amino-acid chain; its full sequence is FK506-binding protein 4 (375 aa).

Disordered regions lie at residues 55-78 (GFED…EEEI) and 127-265 (PPDF…SKMT). 2 stretches are compositionally biased toward acidic residues: residues 56–66 (FEDDYDEEEQE) and 131–173 (FDQD…DPDR). Residues 196–216 (DSKKRAAEKPVKETAAKKLKA) are compositionally biased toward basic and acidic residues. Low complexity predominate over residues 217-230 (DASAASAASTPTKA). The segment covering 231 to 261 (IETKGEKQTKGAKDTKPKSETVEKKTVDKST) has biased composition (basic and acidic residues). The region spanning 289 to 375 (GQKVGMRYVG…VFDVKLVEIK (87 aa)) is the PPIase FKBP-type domain.

It belongs to the FKBP-type PPIase family. FKBP3/4 subfamily. As to quaternary structure, binds to histones H3 and H4.

The protein resides in the nucleus. It carries out the reaction [protein]-peptidylproline (omega=180) = [protein]-peptidylproline (omega=0). Inhibited by both FK506 and rapamycin. In terms of biological role, PPIase that acts as a histone chaperone. Histone proline isomerase that increases the rate of cis-trans isomerization at prolines on the histone H3 N-terminal tail. Proline isomerization influences H3 methylation thereby regulating gene expression. This is FK506-binding protein 4 (FPR4) from Mycosarcoma maydis (Corn smut fungus).